A 393-amino-acid chain; its full sequence is Cysteine desulfurase (393 aa).

Pyridoxal 5'-phosphate contacts are provided by residues 76 to 77 (GT), Asn155, Gln183, and 203 to 205 (SAH). Residue Lys206 is modified to N6-(pyridoxal phosphate)lysine. Thr241 lines the pyridoxal 5'-phosphate pocket. The active-site Cysteine persulfide intermediate is Cys328. Position 328 (Cys328) interacts with [2Fe-2S] cluster.

This sequence belongs to the class-V pyridoxal-phosphate-dependent aminotransferase family. NifS/IscS subfamily. As to quaternary structure, homodimer. Pyridoxal 5'-phosphate is required as a cofactor.

The catalysed reaction is (sulfur carrier)-H + L-cysteine = (sulfur carrier)-SH + L-alanine. Its function is as follows. Catalyzes the removal of elemental sulfur atoms from cysteine to produce alanine. Seems to participate in the biosynthesis of the nitrogenase metalloclusters by providing the inorganic sulfur required for the Fe-S core formation. This is Cysteine desulfurase from Bradyrhizobium diazoefficiens (strain JCM 10833 / BCRC 13528 / IAM 13628 / NBRC 14792 / USDA 110).